Reading from the N-terminus, the 311-residue chain is tRNA pseudouridine synthase B (311 aa).

The active-site Nucleophile is the Asp-49.

Belongs to the pseudouridine synthase TruB family. Type 1 subfamily.

The enzyme catalyses uridine(55) in tRNA = pseudouridine(55) in tRNA. Responsible for synthesis of pseudouridine from uracil-55 in the psi GC loop of transfer RNAs. The sequence is that of tRNA pseudouridine synthase B from Actinobacillus succinogenes (strain ATCC 55618 / DSM 22257 / CCUG 43843 / 130Z).